Consider the following 260-residue polypeptide: NAD-capped RNA hydrolase NudC (260 aa).

Arg69 provides a ligand contact to substrate. Cys98 and Cys101 together coordinate Zn(2+). Glu111 serves as a coordination point for substrate. 2 residues coordinate Zn(2+): Cys116 and Cys119. Tyr124 is a substrate binding site. A Nudix hydrolase domain is found at 125-248; the sequence is PQIAPCIIVA…TVARRLIEDT (124 aa). Positions 158, 174, and 178 each coordinate a divalent metal cation. The Nudix box signature appears at 159-180; it reads GFVEVGETLEQTVVREVMEESQ. Residue 192 to 199 participates in substrate binding; it reads QPWPFPHS. Position 219 (Glu219) interacts with a divalent metal cation. Ala241 contacts substrate.

This sequence belongs to the Nudix hydrolase family. NudC subfamily. As to quaternary structure, homodimer. Mg(2+) is required as a cofactor. Mn(2+) serves as cofactor. The cofactor is Zn(2+).

It carries out the reaction a 5'-end NAD(+)-phospho-ribonucleoside in mRNA + H2O = a 5'-end phospho-adenosine-phospho-ribonucleoside in mRNA + beta-nicotinamide D-ribonucleotide + 2 H(+). The catalysed reaction is NAD(+) + H2O = beta-nicotinamide D-ribonucleotide + AMP + 2 H(+). The enzyme catalyses NADH + H2O = reduced beta-nicotinamide D-ribonucleotide + AMP + 2 H(+). Functionally, mRNA decapping enzyme that specifically removes the nicotinamide adenine dinucleotide (NAD) cap from a subset of mRNAs by hydrolyzing the diphosphate linkage to produce nicotinamide mononucleotide (NMN) and 5' monophosphate mRNA. The NAD-cap is present at the 5'-end of some mRNAs and stabilizes RNA against 5'-processing. Has preference for mRNAs with a 5'-end purine. Catalyzes the hydrolysis of a broad range of dinucleotide pyrophosphates. The polypeptide is NAD-capped RNA hydrolase NudC (Pectobacterium atrosepticum (strain SCRI 1043 / ATCC BAA-672) (Erwinia carotovora subsp. atroseptica)).